The sequence spans 857 residues: Gelation factor (857 aa).

Position 1 is a blocked amino end (Met) (methionine 1). Positions 1 to 250 are actin-binding; it reads MAAAPSGKTW…EKKRRETSDA (250 aa). 2 consecutive Calponin-homology (CH) domains span residues 12-117 and 125-227; these read DVQK…LRYQ and NSPK…DYAL. Residues 229-246 are regulatory site; it reads KEKRDADALAALEKKRRE. Filamin repeat units follow at residues 245 to 346, 347 to 446, 447 to 545, 546 to 645, 646 to 747, and 763 to 837; these read RETS…NVKI, DGSD…EVKI, LNSD…SIHI, KPAA…TVTV, KPAP…DVKC, and FTVA…KQVL. Residues 832-857 form a disordered region; it reads PFKQVLGNPGKKNPEVKSFTTTRTAN.

Homodimer.

F-actin cross-linking protein. This Dictyostelium discoideum (Social amoeba) protein is Gelation factor (abpC).